The following is a 315-amino-acid chain: Putative methyltransferase NSUN5C (315 aa).

Residues 50–56 (VPPQAIK), Asp74, Arg79, and Asp121 contribute to the S-adenosyl-L-methionine site. Cys175 serves as the catalytic Nucleophile. Positions 245–269 (TSASQAKASAPERTPSPAPKRKKRA) are disordered.

This sequence belongs to the class I-like SAM-binding methyltransferase superfamily. RsmB/NOP family. As to expression, ubiquitous.

In terms of biological role, may have S-adenosyl-L-methionine-dependent methyl-transferase activity. This is Putative methyltransferase NSUN5C (NSUN5P2) from Homo sapiens (Human).